The sequence spans 2617 residues: DNA-directed RNA polymerase subunit beta'' (2617 aa).

4 residues coordinate Zn(2+): C263, C334, C341, and C344.

Belongs to the RNA polymerase beta' chain family. RpoC2 subfamily. In plastids the minimal PEP RNA polymerase catalytic core is composed of four subunits: alpha, beta, beta', and beta''. When a (nuclear-encoded) sigma factor is associated with the core the holoenzyme is formed, which can initiate transcription. It depends on Zn(2+) as a cofactor.

The protein localises to the plastid. The protein resides in the chloroplast. The catalysed reaction is RNA(n) + a ribonucleoside 5'-triphosphate = RNA(n+1) + diphosphate. Its function is as follows. DNA-dependent RNA polymerase catalyzes the transcription of DNA into RNA using the four ribonucleoside triphosphates as substrates. The chain is DNA-directed RNA polymerase subunit beta'' from Oedogonium cardiacum (Filamentous green alga).